We begin with the raw amino-acid sequence, 430 residues long: Protein translocase subunit SecY (430 aa).

Helical transmembrane passes span 18-38 (IFFT…PAPG), 68-88 (FSIF…MQLL), 117-137 (LAIS…NNYL), 147-167 (IMSY…LIWL), 179-199 (GISI…LIQF), 217-237 (VLGL…VLEA), 269-289 (GVIP…LTLF), 308-328 (NVGM…YAFV), 368-388 (FVGS…TKFM), and 389-409 (GLPQ…GVAI).

It belongs to the SecY/SEC61-alpha family. As to quaternary structure, component of the Sec protein translocase complex. Heterotrimer consisting of SecY, SecE and SecG subunits. The heterotrimers can form oligomers, although 1 heterotrimer is thought to be able to translocate proteins. Interacts with the ribosome. Interacts with SecDF, and other proteins may be involved. Interacts with SecA.

The protein resides in the cell membrane. Functionally, the central subunit of the protein translocation channel SecYEG. Consists of two halves formed by TMs 1-5 and 6-10. These two domains form a lateral gate at the front which open onto the bilayer between TMs 2 and 7, and are clamped together by SecE at the back. The channel is closed by both a pore ring composed of hydrophobic SecY resides and a short helix (helix 2A) on the extracellular side of the membrane which forms a plug. The plug probably moves laterally to allow the channel to open. The ring and the pore may move independently. The protein is Protein translocase subunit SecY of Staphylococcus aureus (strain NCTC 8325 / PS 47).